We begin with the raw amino-acid sequence, 189 residues long: Protein seele (189 aa).

The signal sequence occupies residues 1-17 (MLTKALILFGLLALAQG). The 154-residue stretch at 23–176 (REVKCHVCKA…EQASYCDESP (154 aa)) folds into the Saposin B-type domain. 3 disulfide bridges follow: Cys27–Cys172, Cys30–Cys165, and Cys85–Cys136. Positions 186–189 (KEEL) match the Prevents secretion from ER motif.

Belongs to the canopy family.

Its subcellular location is the endoplasmic reticulum. Functionally, involved in embryonic dorsal-ventral patterning which is generated by a series of serine protease processing events where gd processes snk which cleaves ea which then processes spz into the activating ligand for the Toll receptor. Required during this process for the secretion of ea from the developing embryo into the perivitelline space and for ea processing. This Drosophila melanogaster (Fruit fly) protein is Protein seele.